The sequence spans 630 residues: tRNA uridine 5-carboxymethylaminomethyl modification enzyme MnmG (630 aa).

Gly13–Gly18 serves as a coordination point for FAD. Gly273–Phe287 is an NAD(+) binding site.

It belongs to the MnmG family. As to quaternary structure, homodimer. Heterotetramer of two MnmE and two MnmG subunits. The cofactor is FAD.

The protein localises to the cytoplasm. Functionally, NAD-binding protein involved in the addition of a carboxymethylaminomethyl (cmnm) group at the wobble position (U34) of certain tRNAs, forming tRNA-cmnm(5)s(2)U34. This chain is tRNA uridine 5-carboxymethylaminomethyl modification enzyme MnmG, found in Pseudomonas putida (strain W619).